An 88-amino-acid polypeptide reads, in one-letter code: Small ribosomal subunit protein uS19 (88 aa).

The protein belongs to the universal ribosomal protein uS19 family.

Its function is as follows. Protein S19 forms a complex with S13 that binds strongly to the 16S ribosomal RNA. The sequence is that of Small ribosomal subunit protein uS19 from Chlamydia abortus (strain DSM 27085 / S26/3) (Chlamydophila abortus).